Here is a 121-residue protein sequence, read N- to C-terminus: MIFNIGIDVVEVDRFKDMKRFDEFLKRVFTSCELEYIKQKRYNPETIAGYFAAKEAVAKALSTGVVFCFKDIEIQKGKTGCPMVKLYNRAEALCFELGIKNIVVSISHQKSVAVAVAIAEK.

Mg(2+)-binding residues include D8 and E55.

Belongs to the P-Pant transferase superfamily. AcpS family. Mg(2+) is required as a cofactor.

Its subcellular location is the cytoplasm. It catalyses the reaction apo-[ACP] + CoA = holo-[ACP] + adenosine 3',5'-bisphosphate + H(+). Transfers the 4'-phosphopantetheine moiety from coenzyme A to a Ser of acyl-carrier-protein. This chain is Holo-[acyl-carrier-protein] synthase, found in Caldicellulosiruptor bescii (strain ATCC BAA-1888 / DSM 6725 / KCTC 15123 / Z-1320) (Anaerocellum thermophilum).